Here is a 319-residue protein sequence, read N- to C-terminus: Zinc finger protein-like 1 homolog (319 aa).

The segment at 1 to 43 adopts a B box-type; degenerate zinc-finger fold; it reads MGLCKCPKRKVTNLFCYEHRVNVCEFCLVDNHPNCVVQSYLNW. The RING-type; atypical zinc-finger motif lies at 53-101; that stretch reads CSLCHTTLTQGETIRLNCLHLLHWRCFDDWAASFPPTTAPAGYRCPCCS. Residues 212–232 are disordered; it reads ESSSDTRPLLRQDRDADNEEN. The segment covering 219–232 has biased composition (basic and acidic residues); sequence PLLRQDRDADNEEN. Residues 264–284 traverse the membrane as a helical segment; that stretch reads KMAIFVMFLALLALITIITVL.

Belongs to the ZFPL1 family.

It is found in the membrane. The polypeptide is Zinc finger protein-like 1 homolog (Caenorhabditis briggsae).